The primary structure comprises 117 residues: Large ribosomal subunit protein bL17 (117 aa).

The protein belongs to the bacterial ribosomal protein bL17 family. Part of the 50S ribosomal subunit. Contacts protein L32.

This chain is Large ribosomal subunit protein bL17, found in Coprothermobacter proteolyticus (strain ATCC 35245 / DSM 5265 / OCM 4 / BT).